The sequence spans 1887 residues: ATP-dependent DNA helicase tlh1 (1887 aa).

Over residues 329-347 (NQQRREQQDKGENKKRQDD) the composition is skewed to basic and acidic residues. Disordered regions lie at residues 329 to 372 (NQQR…EEEE), 504 to 552 (ERKE…NTDD), and 1110 to 1135 (MVEGDKEKDKTNEEKNKDEVKAEMTQ). Acidic residues-rich tracts occupy residues 360–372 (LEDDEKDNDEEEE) and 524–533 (SAEDDNDNDN). Low complexity predominate over residues 540–549 (NNNNNNNNTN). The segment covering 1112–1131 (EGDKEKDKTNEEKNKDEVKA) has biased composition (basic and acidic residues). One can recognise a Helicase ATP-binding domain in the interval 1200-1375 (YFSLLNRMNL…RQTFCTNFYV (176 aa)). ATP-binding positions include 1213–1220 (LPTGGGKS) and 1240–1247 (MNMVTLVL). Residues 1322–1325 (DEAH) carry the DEAH box motif. Residues 1401–1559 (DLRTLMKRTK…CVRSFLASEM (159 aa)) form the Helicase C-terminal domain. Residues 1613–1643 (YNASFSSSPPPQPGNSSGMSAMNTNTTSTTP) form a disordered region. Low complexity predominate over residues 1626-1642 (GNSSGMSAMNTNTTSTT). The CCHC-type zinc-finger motif lies at 1804-1821 (STCYKCGKADHNLRECKL).

It belongs to the helicase family. RecQ subfamily.

It catalyses the reaction Couples ATP hydrolysis with the unwinding of duplex DNA by translocating in the 3'-5' direction.. The catalysed reaction is ATP + H2O = ADP + phosphate + H(+). A probable ATP-dependent 3'-5' DNA helicase. Has a role in telomerase-independent telomere maintenance. The chain is ATP-dependent DNA helicase tlh1 from Schizosaccharomyces pombe (strain 972 / ATCC 24843) (Fission yeast).